Reading from the N-terminus, the 379-residue chain is Cytochrome b (379 aa).

A run of 4 helical transmembrane segments spans residues 33–53 (FGSL…FLAM), 77–98 (WLIR…FIHV), 113–133 (WNIG…GYVL), and 178–198 (FFAF…VHLL). Heme b contacts are provided by histidine 83 and histidine 97. Residues histidine 182 and histidine 196 each coordinate heme b. Position 201 (histidine 201) interacts with a ubiquinone. 4 helical membrane passes run 226-246 (IKDL…ALFF), 288-308 (LGGV…PLLN), 320-340 (ITQT…WIGG), and 347-367 (FTTI…ILMP).

Belongs to the cytochrome b family. The cytochrome bc1 complex contains 11 subunits: 3 respiratory subunits (MT-CYB, CYC1 and UQCRFS1), 2 core proteins (UQCRC1 and UQCRC2) and 6 low-molecular weight proteins (UQCRH/QCR6, UQCRB/QCR7, UQCRQ/QCR8, UQCR10/QCR9, UQCR11/QCR10 and a cleavage product of UQCRFS1). This cytochrome bc1 complex then forms a dimer. It depends on heme b as a cofactor.

It localises to the mitochondrion inner membrane. Its function is as follows. Component of the ubiquinol-cytochrome c reductase complex (complex III or cytochrome b-c1 complex) that is part of the mitochondrial respiratory chain. The b-c1 complex mediates electron transfer from ubiquinol to cytochrome c. Contributes to the generation of a proton gradient across the mitochondrial membrane that is then used for ATP synthesis. The protein is Cytochrome b (MT-CYB) of Akodon aerosus (Highland grass mouse).